Reading from the N-terminus, the 318-residue chain is RNA polymerase II transcription factor B subunit 3 (318 aa).

An RING-type zinc finger spans residues cysteine 13–cysteine 54.

One of the nine subunits forming the core-TFIIH basal transcription factor. Also interacts with skp1 and with the mcs2-mcs6 complex.

Its subcellular location is the cytoplasm. It localises to the nucleus. Functionally, acts as a component of the general transcription and DNA repair factor IIH (TFIIH or factor B), which is essential for both basal and activated transcription, and is involved in nucleotide excision repair (NER) of damaged DNA. TFIIH has CTD kinase activity and DNA-dependent ATPase activity, and is essential for polymerase II transcription. The chain is RNA polymerase II transcription factor B subunit 3 (pmh1) from Schizosaccharomyces pombe (strain 972 / ATCC 24843) (Fission yeast).